The following is a 1318-amino-acid chain: Tetratricopeptide repeat protein 41 (1318 aa).

TPR repeat units follow at residues 401 to 434 (PRLEMDFLNEDSNVLVFSLLVEVFIAAISLKPCI), 653 to 686 (WIQEKPNGLLYFQHQSLRSAVEHKLLGVSTPVRE), 819 to 852 (GRIILFIGSFLKLMGKINEAEKLFLSAEDLLLQS), 860 to 893 (LRAQNAIGELYLEIGMTPKGLTYFQKAWSNLLRF), 993 to 1029 (MEFLADLLFFLLGENEKSQKKQAIEYYKQVIKIKEKA), and 1047 to 1084 (SDTLCKLAGQLLSGDFCHHATMEAVSYLYRSLDLRAAH). A disordered region spans residues 1295–1318 (KPGFPRRSQIESKLLKTSDDPNKE). Basic and acidic residues predominate over residues 1302–1318 (SQIESKLLKTSDDPNKE).

As to expression, highly expressed in lung and myeloid leukemia cell line (at protein level). Isoform 4: expressed in heart (at protein level).

It localises to the cytoplasm. The polypeptide is Tetratricopeptide repeat protein 41 (Mus musculus (Mouse)).